Here is a 510-residue protein sequence, read N- to C-terminus: Maturase K (510 aa).

This sequence belongs to the intron maturase 2 family. MatK subfamily.

The protein localises to the plastid. The protein resides in the chloroplast. In terms of biological role, usually encoded in the trnK tRNA gene intron. Probably assists in splicing its own and other chloroplast group II introns. The chain is Maturase K from Penstemon heterophyllus (Foothill penstemon).